Here is a 25-residue protein sequence, read N- to C-terminus: Hypotensin-2 (25 aa).

The interval 1-25 is disordered; that stretch reads AEIDFSGIPEDIIKEIKETNAKPPA. Phosphoserine is present on Ser6. The span at 11-25 shows a compositional bias: basic and acidic residues; that stretch reads DIIKEIKETNAKPPA.

This sequence belongs to the non-disulfide-bridged peptide (NDBP) superfamily. In terms of tissue distribution, expressed by the venom gland.

Its subcellular location is the secreted. Its function is as follows. Agonist of the B2 bradykinin receptor (BDKRB2). Potentiates the hypotensive effect of bradykinin (BK) and induces a direct vasorelaxing effect, independently of BK, by endothelium- and nitric oxide (NO)-dependent mechanisms in rat aortic ring preparations. Does not inhibit the angiotensin-converting enzyme (ACE). Also exerts proangiogenic, antiinflammatory, and antifibrogenic activities. Does not inhibit the angiotensin-converting enzyme (ACE) but weakly increases its activity, and weakly inhibits neprilysin (NEP) in a non-competitive manner. Exerts intermediate cytotoxicity and pro-inflammatory effects on mouse macrophages, and increases the phagocytic activity of these murine cells. Presents weak hemolytic activity at physiological concentrations (micromolar range), and weak lactate dehydrogenase (LDH) release from mast cells. Does not induce mast cell degranulation, and antimicrobial effects. In vivo, causes intense pain (but no edema formation), when injected in mice hind paws. Also induces discomfort and anxiety in mice, as it moderately diminishes locomotion and moderately increases rearing behavior. The polypeptide is Hypotensin-2 (Tityus serrulatus (Brazilian scorpion)).